Here is a 206-residue protein sequence, read N- to C-terminus: Large ribosomal subunit protein uL4 (206 aa).

A disordered region spans residues 47–77 (TRAQKGRSDVTGSTRKQWRQKGTGRARTGAA).

The protein belongs to the universal ribosomal protein uL4 family. In terms of assembly, part of the 50S ribosomal subunit.

Its function is as follows. One of the primary rRNA binding proteins, this protein initially binds near the 5'-end of the 23S rRNA. It is important during the early stages of 50S assembly. It makes multiple contacts with different domains of the 23S rRNA in the assembled 50S subunit and ribosome. In terms of biological role, forms part of the polypeptide exit tunnel. The chain is Large ribosomal subunit protein uL4 from Nitrosomonas europaea (strain ATCC 19718 / CIP 103999 / KCTC 2705 / NBRC 14298).